Reading from the N-terminus, the 218-residue chain is Ras-related protein RabT2 (218 aa).

Residue 32–39 participates in GTP binding; sequence GDYKTGKG. The Effector region motif lies at 54-61; it reads VSSIGVDF. GTP is bound by residues 80-84 and 140-143; these read DANSC and NKCD. Cys215 carries the post-translational modification Cysteine methyl ester. A lipid anchor (S-geranylgeranyl cysteine) is attached at Cys215. Residues 216 to 218 constitute a propeptide, removed in mature form; that stretch reads NIL.

Belongs to the small GTPase superfamily. Rab family.

It is found in the cell membrane. The polypeptide is Ras-related protein RabT2 (rabT2) (Dictyostelium discoideum (Social amoeba)).